We begin with the raw amino-acid sequence, 301 residues long: 4-hydroxy-tetrahydrodipicolinate synthase (301 aa).

Thr-46 is a pyruvate binding site. Catalysis depends on Tyr-134, which acts as the Proton donor/acceptor. The Schiff-base intermediate with substrate role is filled by Lys-162. Pyruvate is bound at residue Ile-203.

Belongs to the DapA family. In terms of assembly, homotetramer; dimer of dimers.

The protein localises to the cytoplasm. It catalyses the reaction L-aspartate 4-semialdehyde + pyruvate = (2S,4S)-4-hydroxy-2,3,4,5-tetrahydrodipicolinate + H2O + H(+). It participates in amino-acid biosynthesis; L-lysine biosynthesis via DAP pathway; (S)-tetrahydrodipicolinate from L-aspartate: step 3/4. In terms of biological role, catalyzes the condensation of (S)-aspartate-beta-semialdehyde [(S)-ASA] and pyruvate to 4-hydroxy-tetrahydrodipicolinate (HTPA). This chain is 4-hydroxy-tetrahydrodipicolinate synthase, found in Anaplasma marginale (strain St. Maries).